Here is a 469-residue protein sequence, read N- to C-terminus: Relaxin-3 receptor 1 (469 aa).

Residues 1–81 lie on the Extracellular side of the membrane; the sequence is MQMADAATIA…ESADTEARVR (81 aa). Residues Asn36 and Asn40 are each glycosylated (N-linked (GlcNAc...) asparagine). Residues 82-102 form a helical membrane-spanning segment; sequence ILISVVYWVVCALGLAGNLLV. The Cytoplasmic portion of the chain corresponds to 103–119; it reads LYLMKSMQGWRKSSINL. Residues 120–140 traverse the membrane as a helical segment; that stretch reads FVTNLALTDFQFVLTLPFWAV. Over 141-156 the chain is Extracellular; it reads ENALDFKWPFGKAMCK. Residues Cys155 and Cys247 are joined by a disulfide bond. The chain crosses the membrane as a helical span at residues 157–177; the sequence is IVSMVTSMNMYASVFFLTAMS. The Cytoplasmic portion of the chain corresponds to 178-215; that stretch reads VTRYHSVASALKSHRTRGHGRGDCCGRSLGDSCCFSAK. Residues 216 to 236 form a helical membrane-spanning segment; that stretch reads ALCVWIWALAALASLPSAIFS. Residues 237–270 are Extracellular-facing; it reads TTVKVMGEELCLVRFPDKLLGRDRQFWLGLYHSQ. A helical transmembrane segment spans residues 271 to 291; the sequence is KVLLGFVLPLGIIILCYLLLV. The Cytoplasmic segment spans residues 292 to 329; it reads RFIADRRAAGTKGGAAVAGGRPTGASARRLSKVTKSVT. A helical transmembrane segment spans residues 330–350; it reads IVVLSFFLCWLPNQALTTWSI. Over 351-356 the chain is Extracellular; that stretch reads LIKFNA. A helical membrane pass occupies residues 357 to 377; the sequence is VPFSQEYFLCQVYAFPVSVCL. Residues 378-469 are Cytoplasmic-facing; sequence AHSNSCLNPV…YDLLPSSSAY (92 aa).

This sequence belongs to the G-protein coupled receptor 1 family. As to expression, expressed predominantly in brain regions. Highest expression in substantia nigra and pituitary, followed by hippocampus, spinal cord, amygdala, caudate nucleus and corpus callosum, quite low level in cerebellum. In peripheral tissues, relatively high levels in adrenal glands, low levels in pancreas, salivary gland, placenta, mammary gland and testis.

The protein localises to the cell membrane. Its function is as follows. Receptor for RNL3/relaxin-3. Binding of the ligand inhibit cAMP accumulation. This chain is Relaxin-3 receptor 1 (RXFP3), found in Homo sapiens (Human).